The sequence spans 79 residues: Acyl carrier protein (79 aa).

Residues 3 to 78 (QEILEKVCSI…DAVKFIEEKK (76 aa)) enclose the Carrier domain. An O-(pantetheine 4'-phosphoryl)serine modification is found at serine 38.

This sequence belongs to the acyl carrier protein (ACP) family. 4'-phosphopantetheine is transferred from CoA to a specific serine of apo-ACP by AcpS. This modification is essential for activity because fatty acids are bound in thioester linkage to the sulfhydryl of the prosthetic group.

Its subcellular location is the cytoplasm. It functions in the pathway lipid metabolism; fatty acid biosynthesis. Carrier of the growing fatty acid chain in fatty acid biosynthesis. In Prochlorococcus marinus (strain MIT 9301), this protein is Acyl carrier protein.